We begin with the raw amino-acid sequence, 431 residues long: MDLFILTRFILFLSFFMKSIHCQYSESQESGHNRNAPDKELTTEEFQLIFHQSQTVDIEYDFINITTEMIETERKVSFTIDGKEYHLSLTPAASQSVLPYGTKIKSAIWWTDNDTHIHEEDYSDERWDSRAIYENLEIMATILVRTENGTSYYDGVFVKYSNEGVRSLPGRLMNIYGANYHFVYDSNGSVYDVVLNGQDEPAVPADMASKIIFYSETPCTCRLLIIQDLLMKTSRRLSSISTIFWNAVNLRFRPVQHPKVNIIITGIVIAKNEAAFQHVYRARYSKNSKLVHTGRVIDNGRYFFGTNFDPYYDNYDASFTMASMDDPTGKGGATVIGGICSSSNNIAYIRDVGSYSGVKVATHELGHLLNGQHDSDTTCSEKINDNIYTIMAKQGSTKASKFVWSSCTLTAFANFSKTTSAACLKDTYRKQ.

The first 22 residues, 1–22, serve as a signal peptide directing secretion; sequence MDLFILTRFILFLSFFMKSIHC. N64, N113, N148, and N187 each carry an N-linked (GlcNAc...) asparagine glycan. The Peptidase M12B domain maps to 228-428; the sequence is DLLMKTSRRL…TSAACLKDTY (201 aa). Intrachain disulfides connect C340–C423 and C379–C407. H363 is a Zn(2+) binding site. E364 is an active-site residue. The Zn(2+) site is built by H367 and H373. A glycan (N-linked (GlcNAc...) asparagine) is linked at N414.

It in the C-terminal section; belongs to the venom metalloproteinase (M12B) family. As to quaternary structure, monomer. Requires Zn(2+) as cofactor. Expressed by the venom gland.

It localises to the secreted. Its activity is regulated as follows. The gelatinase activity is inhibited by EDTA. Its function is as follows. The recombinant protein has gelatinase activity. In vivo, injection of this recombinant into fifth instar L.oleracea (host) larvae results in partial insect mortality associated with the molt to sixth instar, with surviving insects showing retarded development and growth. This Eulophus pennicornis (Parasitoid wasp) protein is Venom metalloproteinase 1.